Consider the following 490-residue polypeptide: Colicin-5 (490 aa).

A compositionally biased stretch (polar residues) spans 1–20; it reads MDKVTDNSPDVESTESTEGS. 2 disordered regions span residues 1–29 and 146–171; these read MDKV…VDTG and QKAR…EIAR. Over residues 146–170 the composition is skewed to basic and acidic residues; that stretch reads QKAREEAEAAEKALREAERQRDEIA. Residues 447-467 form a helical membrane-spanning segment; it reads IVALMFSFIVGVPLGFWGIAI.

It belongs to the channel forming colicin family.

The protein localises to the host membrane. Its function is as follows. This colicin is a channel-forming colicin. This class of transmembrane toxins depolarize the cytoplasmic membrane, leading to dissipation of cellular energy. Colicins are polypeptide toxins produced by and active against E.coli and closely related bacteria. The chain is Colicin-5 (cfa) from Escherichia coli.